The primary structure comprises 161 residues: N5-carboxyaminoimidazole ribonucleotide mutase (161 aa).

Positions 9, 12, and 39 each coordinate substrate.

The protein belongs to the AIR carboxylase family. Class I subfamily.

The enzyme catalyses 5-carboxyamino-1-(5-phospho-D-ribosyl)imidazole + H(+) = 5-amino-1-(5-phospho-D-ribosyl)imidazole-4-carboxylate. Its pathway is purine metabolism; IMP biosynthesis via de novo pathway; 5-amino-1-(5-phospho-D-ribosyl)imidazole-4-carboxylate from 5-amino-1-(5-phospho-D-ribosyl)imidazole (N5-CAIR route): step 2/2. In terms of biological role, catalyzes the conversion of N5-carboxyaminoimidazole ribonucleotide (N5-CAIR) to 4-carboxy-5-aminoimidazole ribonucleotide (CAIR). The sequence is that of N5-carboxyaminoimidazole ribonucleotide mutase from Vibrio vulnificus (strain CMCP6).